The sequence spans 74 residues: Putative membrane protein insertion efficiency factor (74 aa).

Belongs to the UPF0161 family.

Its subcellular location is the cell inner membrane. Could be involved in insertion of integral membrane proteins into the membrane. This chain is Putative membrane protein insertion efficiency factor, found in Leptospira interrogans serogroup Icterohaemorrhagiae serovar copenhageni (strain Fiocruz L1-130).